Reading from the N-terminus, the 685-residue chain is DNA-directed RNA polymerase subunit beta' (685 aa).

Zn(2+)-binding residues include Cys69, Cys71, Cys87, and Cys90. The Mg(2+) site is built by Asp489, Asp491, and Asp493.

The protein belongs to the RNA polymerase beta' chain family. RpoC1 subfamily. As to quaternary structure, in plastids the minimal PEP RNA polymerase catalytic core is composed of four subunits: alpha, beta, beta', and beta''. When a (nuclear-encoded) sigma factor is associated with the core the holoenzyme is formed, which can initiate transcription. Mg(2+) is required as a cofactor. Requires Zn(2+) as cofactor.

The protein localises to the plastid. It localises to the chloroplast. It catalyses the reaction RNA(n) + a ribonucleoside 5'-triphosphate = RNA(n+1) + diphosphate. In terms of biological role, DNA-dependent RNA polymerase catalyzes the transcription of DNA into RNA using the four ribonucleoside triphosphates as substrates. This is DNA-directed RNA polymerase subunit beta' from Buxus microphylla (Littleleaf boxwood).